Consider the following 1374-residue polypeptide: F-actin-uncapping protein LRRC16A (1374 aa).

Met1 carries the N-acetylmethionine modification. Ser122 is subject to Phosphoserine. LRR repeat units lie at residues 245–269 (SNRL…LAGA), 275–298 (NSGL…SLSI), 304–327 (PKGL…SLCQ), 336–363 (ASTL…FLAQ), 391–418 (LQCL…SFKQ), 423–447 (SLAL…LLLG), 485–510 (IHNI…VWLS), 547–570 (DSPL…IINA), 574–597 (NTSL…MLAK), and 658–682 (LQKI…AYRL). Residues 714-738 (GDAIQEDLKAAERLMRDAKNSKTLL) are a coiled coil. The residue at position 920 (Thr920) is a Phosphothreonine. Disordered regions lie at residues 961–982 (PFPS…PSEE) and 1040–1374 (KMDC…FIFV). One copy of the LRR 11 repeat lies at 962–985 (FPSVRQEKRSSGLISELPSEEGRR). An inhibits capping activity of CP region spans residues 962–1084 (FPSVRQEKRS…LIKSRSRSER (123 aa)). The residue at position 972 (Ser972) is a Phosphoserine. Over residues 1040–1064 (KMDCKRSSSRSSDAHELGEGDEKKK) the composition is skewed to basic and acidic residues. The interval 1058-1092 (EGDEKKKRDSRRSGFLNLIKSRSRSERPPTVLMTE) is necessary for localization at the cell membrane. Ser1096 bears the Phosphoserine mark. Basic and acidic residues-rich tracts occupy residues 1108–1132 (TTRK…KTPE) and 1141–1150 (EAGRAERSDS). A compositionally biased stretch (polar residues) spans 1191–1204 (VISQDPSSPVSCNT). Thr1229 carries the post-translational modification Phosphothreonine. Over residues 1232–1244 (KNAKAEPRVDGGC) the composition is skewed to basic and acidic residues. A compositionally biased stretch (low complexity) spans 1245 to 1263 (RSRSSSSMPTSPKPLLQSP). Ser1281, Ser1289, Ser1291, Ser1295, Ser1319, Ser1328, and Ser1335 each carry phosphoserine. Residues 1317 to 1330 (QNSSQSSPRSFSQE) are compositionally biased toward low complexity. Residues 1343-1356 (QEQKQRSSGKDGHQ) are compositionally biased toward basic and acidic residues. At Ser1363 the chain carries Phosphoserine.

Belongs to the CARMIL family. Homodimer. Interacts (via C-terminus) with heterodimeric capping protein (CP); this interaction uncaps barbed ends capped by CP, enhances barbed-end actin polymerization and promotes lamellipodial formation and cell migration. Interacts with MYO1E. Interacts with TRIO.

It is found in the cytoplasm. It localises to the cytoskeleton. The protein resides in the cell membrane. Its subcellular location is the cell projection. The protein localises to the lamellipodium. In terms of biological role, cell membrane-cytoskeleton-associated protein that plays a role in the regulation of actin polymerization at the barbed end of actin filaments. Prevents F-actin heterodimeric capping protein (CP) activity at the leading edges of migrating cells, and hence generates uncapped barbed ends and enhances actin polymerization, however, seems unable to nucleate filaments. Plays a role in lamellipodial protrusion formations and cell migration. The polypeptide is F-actin-uncapping protein LRRC16A (Mus musculus (Mouse)).